The primary structure comprises 223 residues: Small ribosomal subunit protein uS3 (223 aa).

In terms of domain architecture, KH type-2 spans I40–R108.

It belongs to the universal ribosomal protein uS3 family. As to quaternary structure, part of the 30S ribosomal subunit. Forms a tight complex with proteins S10 and S14.

Binds the lower part of the 30S subunit head. Binds mRNA in the 70S ribosome, positioning it for translation. This Thermomicrobium roseum (strain ATCC 27502 / DSM 5159 / P-2) protein is Small ribosomal subunit protein uS3.